A 20-amino-acid polypeptide reads, in one-letter code: Hemocyanin subunit Ia (20 aa).

Residues 1–20 are disordered; sequence ADXQPGDSTDKLLAQKQDDV.

Belongs to the tyrosinase family. Hemocyanin subfamily. As to quaternary structure, composed of 3 major subunits (IB, II and III) and 1 minor subunit (IA) which form homohexamers and heterohexamers. May also form larger structures. Hemolymph.

Its subcellular location is the secreted. The protein resides in the extracellular space. Hemocyanins are copper-containing oxygen carriers occurring freely dissolved in the hemolymph of many mollusks and arthropods. This chain is Hemocyanin subunit Ia, found in Panulirus japonicus (Japanese spiny lobster).